The sequence spans 1142 residues: Zinc finger MYM-type protein 1 (1142 aa).

K25 participates in a covalent cross-link: Glycyl lysine isopeptide (Lys-Gly) (interchain with G-Cter in SUMO2). 3 consecutive MYM-type zinc fingers follow at residues 110-148 (QLFC…PKDV), 160-203 (KTFC…QYEV), and 210-245 (HNLC…SSSL). A Glycyl lysine isopeptide (Lys-Gly) (interchain with G-Cter in SUMO2) cross-link involves residue K284. Residues 300-331 (ELFCSINCFSAYSKAKMESSSVSVVSVVHDTS) form an MYM-type 4 zinc finger. Positions 385–396 (KSSPSEPSNAVA) are enriched in polar residues. The tract at residues 385-413 (KSSPSEPSNAVASSSTEQPSVSPSSSVFS) is disordered. Low complexity predominate over residues 397-413 (SSSTEQPSVSPSSSVFS). Residues 452–538 (KSRSIKKSCC…YQFCDGAVSD (87 aa)) form a TTF-type zinc finger.

The protein resides in the nucleus. The sequence is that of Zinc finger MYM-type protein 1 (ZMYM1) from Homo sapiens (Human).